The primary structure comprises 456 residues: MDIRTHLGINQELSGKPVKVAEGYAEVLLKTQESMKADDKGLVHGGFIFSAADYASMLAVNHPNVVLAGANVKFLKPVKVGDEIICKARVSEDKGKKKKVLVECFKGEDKVFEGEFFTVFLIDMFWRGEKMEVKPFYWKGDKLLLLDQRKLPHQEVWLELKTYEEVAKAIKEMAVRGAPAIGCTAAYGFVLGVKVQKEDPEKVYETLKNTRPTAYNLFWALDRMMKALKEGKDIEEEAKEIEKEDYEANKRMGEIGSEIVPLNAKVLTHCNTGALATAGWGTALGVIRSAHYGGKNIFVWVDETRPYLQGARLTAWELVKESIPHKIITDSTAGFLMKKGMVDLVIVGADRITAKGDVANKIGTYTLAVLCKEHNVPFYVAAPTSTIDSNIKSGEEIIIEERSPEEVKVCGGCAIAPKESDALHLAFDITPAELITGIITEKGIFKPERITEALKD.

The thioesterase stretch occupies residues K40–E113. Positions M124–D456 are MTR-1-P isomerase. Residues R176–A178, R211, and Q309 contribute to the substrate site. D350 acts as the Proton donor in catalysis. N360–K361 contributes to the substrate binding site.

It belongs to the eIF-2B alpha/beta/delta subunits family. MtnA subfamily.

The catalysed reaction is 5-(methylsulfanyl)-alpha-D-ribose 1-phosphate = 5-(methylsulfanyl)-D-ribulose 1-phosphate. It functions in the pathway amino-acid biosynthesis; L-methionine biosynthesis via salvage pathway; L-methionine from S-methyl-5-thio-alpha-D-ribose 1-phosphate: step 1/6. In terms of biological role, catalyzes the interconversion of methylthioribose-1-phosphate (MTR-1-P) into methylthioribulose-1-phosphate (MTRu-1-P). The protein is Methylthioribose-1-phosphate isomerase (mtnA) of Aquifex aeolicus (strain VF5).